We begin with the raw amino-acid sequence, 522 residues long: 3-octaprenyl-4-hydroxybenzoate carboxy-lyase (522 aa).

Asparagine 181 provides a ligand contact to Mn(2+). Prenylated FMN is bound by residues 184–186 (IYR), 198–200 (RWL), and 203–204 (RG). Glutamate 247 serves as a coordination point for Mn(2+). The Proton donor role is filled by aspartate 322.

It belongs to the UbiD family. Homohexamer. Prenylated FMN is required as a cofactor. Requires Mn(2+) as cofactor.

It localises to the cell membrane. It catalyses the reaction a 4-hydroxy-3-(all-trans-polyprenyl)benzoate + H(+) = a 2-(all-trans-polyprenyl)phenol + CO2. It functions in the pathway cofactor biosynthesis; ubiquinone biosynthesis. In terms of biological role, catalyzes the decarboxylation of 3-octaprenyl-4-hydroxy benzoate to 2-octaprenylphenol, an intermediate step in ubiquinone biosynthesis. The protein is 3-octaprenyl-4-hydroxybenzoate carboxy-lyase of Paraburkholderia xenovorans (strain LB400).